We begin with the raw amino-acid sequence, 107 residues long: Iron-binding protein IscA (107 aa).

Fe cation contacts are provided by Cys-35, Cys-99, and Cys-101.

Belongs to the HesB/IscA family. In terms of assembly, homodimer; may form tetramers and higher multimers. The cofactor is Fe cation.

In terms of biological role, is able to transfer iron-sulfur clusters to apo-ferredoxin. Multiple cycles of [2Fe2S] cluster formation and transfer are observed, suggesting that IscA acts catalytically. Recruits intracellular free iron so as to provide iron for the assembly of transient iron-sulfur cluster in IscU in the presence of IscS, L-cysteine and the thioredoxin reductase system TrxA/TrxB. The chain is Iron-binding protein IscA from Yersinia pestis bv. Antiqua (strain Angola).